The following is a 67-amino-acid chain: Bowman-Birk type proteinase inhibitor 1 (67 aa).

7 disulfide bridges follow: cysteine 5–cysteine 59, cysteine 6–cysteine 21, cysteine 9–cysteine 55, cysteine 11–cysteine 19, cysteine 29–cysteine 36, cysteine 33–cysteine 48, and cysteine 38–cysteine 46.

This sequence belongs to the Bowman-Birk serine protease inhibitor family. In terms of assembly, monomer. Although dimerization may occur in solution. As to expression, seed.

In terms of biological role, inhibits trypsin but not chymotrypsin. The inhibitor consists of 2 domains and has 2 sites of interaction with trypsin. The polypeptide is Bowman-Birk type proteinase inhibitor 1 (Dioclea glabra).